We begin with the raw amino-acid sequence, 367 residues long: Glutamate 5-kinase (367 aa).

Lys-10 serves as a coordination point for ATP. Substrate-binding residues include Asp-137 and Asn-149. Residues Thr-169–Asp-170 and Thr-211–Lys-217 contribute to the ATP site. A PUA domain is found at Ala-275–Glu-353.

The protein belongs to the glutamate 5-kinase family.

The protein resides in the cytoplasm. The enzyme catalyses L-glutamate + ATP = L-glutamyl 5-phosphate + ADP. It participates in amino-acid biosynthesis; L-proline biosynthesis; L-glutamate 5-semialdehyde from L-glutamate: step 1/2. Its function is as follows. Catalyzes the transfer of a phosphate group to glutamate to form L-glutamate 5-phosphate. The polypeptide is Glutamate 5-kinase (Yersinia pestis bv. Antiqua (strain Antiqua)).